The following is a 598-amino-acid chain: Elongation factor 4 2 (598 aa).

The tr-type G domain maps to 2-184 (KHIRNFCIIA…GIVKNLPAPK (183 aa)). GTP-binding positions include 14-19 (DHGKST) and 131-134 (NKID).

This sequence belongs to the TRAFAC class translation factor GTPase superfamily. Classic translation factor GTPase family. LepA subfamily.

The protein resides in the cell inner membrane. It carries out the reaction GTP + H2O = GDP + phosphate + H(+). Functionally, required for accurate and efficient protein synthesis under certain stress conditions. May act as a fidelity factor of the translation reaction, by catalyzing a one-codon backward translocation of tRNAs on improperly translocated ribosomes. Back-translocation proceeds from a post-translocation (POST) complex to a pre-translocation (PRE) complex, thus giving elongation factor G a second chance to translocate the tRNAs correctly. Binds to ribosomes in a GTP-dependent manner. This chain is Elongation factor 4 2, found in Rhodopirellula baltica (strain DSM 10527 / NCIMB 13988 / SH1).